The following is a 305-amino-acid chain: Tetraacyldisaccharide 4'-kinase (305 aa).

39–46 (SVGGNGKT) contributes to the ATP binding site.

It belongs to the LpxK family.

It catalyses the reaction a lipid A disaccharide + ATP = a lipid IVA + ADP + H(+). The protein operates within glycolipid biosynthesis; lipid IV(A) biosynthesis; lipid IV(A) from (3R)-3-hydroxytetradecanoyl-[acyl-carrier-protein] and UDP-N-acetyl-alpha-D-glucosamine: step 6/6. Transfers the gamma-phosphate of ATP to the 4'-position of a tetraacyldisaccharide 1-phosphate intermediate (termed DS-1-P) to form tetraacyldisaccharide 1,4'-bis-phosphate (lipid IVA). The chain is Tetraacyldisaccharide 4'-kinase from Pseudoalteromonas atlantica (strain T6c / ATCC BAA-1087).